Consider the following 694-residue polypeptide: Elongation factor G (694 aa).

The tr-type G domain maps to 10-285 (EKTRNIGIMA…GVVDYLPSPL (276 aa)). GTP is bound by residues 19–26 (AHIDAGKT), 83–87 (DTPGH), and 137–140 (NKMD).

It belongs to the TRAFAC class translation factor GTPase superfamily. Classic translation factor GTPase family. EF-G/EF-2 subfamily.

The protein resides in the cytoplasm. Its function is as follows. Catalyzes the GTP-dependent ribosomal translocation step during translation elongation. During this step, the ribosome changes from the pre-translocational (PRE) to the post-translocational (POST) state as the newly formed A-site-bound peptidyl-tRNA and P-site-bound deacylated tRNA move to the P and E sites, respectively. Catalyzes the coordinated movement of the two tRNA molecules, the mRNA and conformational changes in the ribosome. The chain is Elongation factor G from Lactobacillus delbrueckii subsp. bulgaricus (strain ATCC BAA-365 / Lb-18).